The chain runs to 180 residues: Beta-lactoglobulin-1/B (180 aa).

The first 18 residues, 1-18, serve as a signal peptide directing secretion; it reads MKCLLLALGLALACGVQA. Cystine bridges form between cysteine 84–cysteine 178, cysteine 124–cysteine 137, and cysteine 124–cysteine 139.

It belongs to the calycin superfamily. Lipocalin family. Under physiological conditions beta-lactoglobulin exists as an equilibrium mixture of monomeric and dimeric forms. Post-translationally, alternate disulfide bonds occur in equal amounts.

It localises to the secreted. In terms of biological role, lactoglobulin is the primary component of whey, it binds retinol and is probably involved in the transport of that molecule. The polypeptide is Beta-lactoglobulin-1/B (Ovis aries (Sheep)).